The primary structure comprises 180 residues: MGLDDFQGQNKDELSMIEVARAILQDSGKRMAFADIVNAVQNFLGKSDEEIRERLPQFYTDMNTDGEFISMGHNVWALRSWFPYESVDEEVNHPEDEEDVPRKKHHKKVNAFIGDSDDDDIIDYDSDDPEDEDLDVDEEDTNEDDYSDDDLDDADDNELDDGIEGQLSELHQDDLDDDDE.

The HTH HARE-type domain maps to 14 to 81 (LSMIEVARAI…GHNVWALRSW (68 aa)). The tract at residues 89–180 (EEVNHPEDEE…HQDDLDDDDE (92 aa)) is disordered. Positions 115 to 163 (DSDDDDIIDYDSDDPEDEDLDVDEEDTNEDDYSDDDLDDADDNELDDGI) are enriched in acidic residues.

Belongs to the RpoE family. In terms of assembly, RNAP is composed of a core of 2 alpha, a beta and a beta' subunits. The core is associated with a delta subunit and one of several sigma factors.

Its function is as follows. Participates in both the initiation and recycling phases of transcription. In the presence of the delta subunit, RNAP displays an increased specificity of transcription, a decreased affinity for nucleic acids, and an increased efficiency of RNA synthesis because of enhanced recycling. The sequence is that of Probable DNA-directed RNA polymerase subunit delta from Lactobacillus johnsonii (strain CNCM I-12250 / La1 / NCC 533).